Consider the following 195-residue polypeptide: HTH-type transcriptional regulator BetI (195 aa).

Residues 8-68 (PIRRQQLIEA…ATMRYLISHL (61 aa)) form the HTH tetR-type domain. A DNA-binding region (H-T-H motif) is located at residues 31–50 (SIVQIARRAGVSNGIISHYF).

The protein operates within amine and polyamine biosynthesis; betaine biosynthesis via choline pathway [regulation]. Its function is as follows. Repressor involved in the biosynthesis of the osmoprotectant glycine betaine. It represses transcription of the choline transporter BetT and the genes of BetAB involved in the synthesis of glycine betaine. This chain is HTH-type transcriptional regulator BetI, found in Pectobacterium atrosepticum (strain SCRI 1043 / ATCC BAA-672) (Erwinia carotovora subsp. atroseptica).